A 305-amino-acid chain; its full sequence is Oxygen-dependent coproporphyrinogen-III oxidase (305 aa).

Ser-93 contributes to the substrate binding site. A divalent metal cation is bound by residues His-97 and His-107. His-107 (proton donor) is an active-site residue. Residue 109–111 (NVR) participates in substrate binding. A divalent metal cation is bound by residues His-146 and His-176. An important for dimerization region spans residues 241 to 276 (YVEFNLVFDRGTLFGLQSGGRTESILMSLPPQVRWG). 259–261 (GGR) provides a ligand contact to substrate.

It belongs to the aerobic coproporphyrinogen-III oxidase family. In terms of assembly, homodimer. A divalent metal cation is required as a cofactor.

The protein localises to the cytoplasm. It carries out the reaction coproporphyrinogen III + O2 + 2 H(+) = protoporphyrinogen IX + 2 CO2 + 2 H2O. It functions in the pathway porphyrin-containing compound metabolism; protoporphyrin-IX biosynthesis; protoporphyrinogen-IX from coproporphyrinogen-III (O2 route): step 1/1. In terms of biological role, involved in the heme biosynthesis. Catalyzes the aerobic oxidative decarboxylation of propionate groups of rings A and B of coproporphyrinogen-III to yield the vinyl groups in protoporphyrinogen-IX. In Pseudomonas aeruginosa (strain LESB58), this protein is Oxygen-dependent coproporphyrinogen-III oxidase.